Here is a 234-residue protein sequence, read N- to C-terminus: Large ribosomal subunit protein uL1 (234 aa).

This sequence belongs to the universal ribosomal protein uL1 family. Part of the 50S ribosomal subunit.

Binds directly to 23S rRNA. The L1 stalk is quite mobile in the ribosome, and is involved in E site tRNA release. Functionally, protein L1 is also a translational repressor protein, it controls the translation of the L11 operon by binding to its mRNA. The polypeptide is Large ribosomal subunit protein uL1 (Campylobacter fetus subsp. fetus (strain 82-40)).